The sequence spans 394 residues: NAD(P)H-quinone oxidoreductase subunit H (394 aa).

Belongs to the complex I 49 kDa subunit family. NDH-1 can be composed of about 15 different subunits; different subcomplexes with different compositions have been identified which probably have different functions.

The protein localises to the cellular thylakoid membrane. It carries out the reaction a plastoquinone + NADH + (n+1) H(+)(in) = a plastoquinol + NAD(+) + n H(+)(out). The catalysed reaction is a plastoquinone + NADPH + (n+1) H(+)(in) = a plastoquinol + NADP(+) + n H(+)(out). In terms of biological role, NDH-1 shuttles electrons from an unknown electron donor, via FMN and iron-sulfur (Fe-S) centers, to quinones in the respiratory and/or the photosynthetic chain. The immediate electron acceptor for the enzyme in this species is believed to be plastoquinone. Couples the redox reaction to proton translocation, and thus conserves the redox energy in a proton gradient. Cyanobacterial NDH-1 also plays a role in inorganic carbon-concentration. This is NAD(P)H-quinone oxidoreductase subunit H from Prochlorococcus marinus (strain NATL1A).